The following is a 334-amino-acid chain: Aspartate carbamoyltransferase catalytic subunit (334 aa).

Residues arginine 71 and threonine 72 each coordinate carbamoyl phosphate. Residue lysine 99 participates in L-aspartate binding. Carbamoyl phosphate-binding residues include arginine 121, histidine 151, and glutamine 154. Arginine 184 and arginine 239 together coordinate L-aspartate. Residues glycine 280 and proline 281 each contribute to the carbamoyl phosphate site.

This sequence belongs to the aspartate/ornithine carbamoyltransferase superfamily. ATCase family. In terms of assembly, heterododecamer (2C3:3R2) of six catalytic PyrB chains organized as two trimers (C3), and six regulatory PyrI chains organized as three dimers (R2).

The enzyme catalyses carbamoyl phosphate + L-aspartate = N-carbamoyl-L-aspartate + phosphate + H(+). Its pathway is pyrimidine metabolism; UMP biosynthesis via de novo pathway; (S)-dihydroorotate from bicarbonate: step 2/3. Catalyzes the condensation of carbamoyl phosphate and aspartate to form carbamoyl aspartate and inorganic phosphate, the committed step in the de novo pyrimidine nucleotide biosynthesis pathway. This is Aspartate carbamoyltransferase catalytic subunit from Pseudomonas entomophila (strain L48).